Reading from the N-terminus, the 233-residue chain is Sugar fermentation stimulation protein homolog (233 aa).

The protein belongs to the SfsA family.

This chain is Sugar fermentation stimulation protein homolog, found in Teredinibacter turnerae (strain ATCC 39867 / T7901).